The following is a 577-amino-acid chain: Proline--tRNA ligase (577 aa).

The protein belongs to the class-II aminoacyl-tRNA synthetase family. ProS type 1 subfamily. Homodimer.

The protein localises to the cytoplasm. The enzyme catalyses tRNA(Pro) + L-proline + ATP = L-prolyl-tRNA(Pro) + AMP + diphosphate. Its function is as follows. Catalyzes the attachment of proline to tRNA(Pro) in a two-step reaction: proline is first activated by ATP to form Pro-AMP and then transferred to the acceptor end of tRNA(Pro). As ProRS can inadvertently accommodate and process non-cognate amino acids such as alanine and cysteine, to avoid such errors it has two additional distinct editing activities against alanine. One activity is designated as 'pretransfer' editing and involves the tRNA(Pro)-independent hydrolysis of activated Ala-AMP. The other activity is designated 'posttransfer' editing and involves deacylation of mischarged Ala-tRNA(Pro). The misacylated Cys-tRNA(Pro) is not edited by ProRS. The chain is Proline--tRNA ligase from Helicobacter pylori (strain G27).